The chain runs to 269 residues: Energy-coupling factor transporter transmembrane protein EcfT (269 aa).

Helical transmembrane passes span 45–65 (RFFLGWGVLLAFIVFLSRVSL), 75–95 (VLWLLVFTVLLHALFTPGEAI), 110–130 (MAALMGVRLVLLVAFAGLLTL), 153–173 (FPAHEMAMMMTIALRFIPTLL), 202–222 (FVPVLVPLFLIVFQRAEDLAL), and 244–264 (CLEDWVALGLMSVSVAGLLFL).

The protein belongs to the energy-coupling factor EcfT family. In terms of assembly, forms a stable energy-coupling factor (ECF) transporter complex composed of 2 membrane-embedded substrate-binding proteins (S component), 2 ATP-binding proteins (A component) and 2 transmembrane proteins (T component). May be able to interact with more than 1 S component at a time.

Its subcellular location is the cell membrane. Its function is as follows. Transmembrane (T) component of an energy-coupling factor (ECF) ABC-transporter complex. Unlike classic ABC transporters this ECF transporter provides the energy necessary to transport a number of different substrates. The polypeptide is Energy-coupling factor transporter transmembrane protein EcfT (Thermanaerovibrio acidaminovorans (strain ATCC 49978 / DSM 6589 / Su883) (Selenomonas acidaminovorans)).